Reading from the N-terminus, the 520-residue chain is RING-type E3 ubiquitin-protein ligase PPIL2 (520 aa).

A U-box domain is found at 35-108; sequence RRLPFDHCSL…GKYHCPVLFT (74 aa). A coiled-coil region spans residues 197–217; it reads LKNTNAETRETLQELYKEFKG. Residue Lys-216 forms a Glycyl lysine isopeptide (Lys-Gly) (interchain with G-Cter in SUMO2) linkage. The region spanning 278–433 is the PPIase cyclophilin-type domain; the sequence is KKGYVRLHTN…EEIRIDATTV (156 aa). The segment at 456–520 is disordered; that stretch reads APETKVKSSQ…SRGFGDFSSW (65 aa). Low complexity predominate over residues 463–474; sequence SSQPQAGSQGPQ. Ser-470 is subject to Phosphoserine. Lys-482 is subject to N6-acetyllysine.

It belongs to the cyclophilin-type PPIase family. PPIL2 subfamily. Component of the minor spliceosome, which splices U12-type introns. Within this complex, interacts with PRPF8/PRP8, EFTUD2/SNU114 and PLRG1. Interacts with isoform 2 of BSG. Interacts (via the PPIase cyclophilin-type domain) with CRNKL1; they may form a trimeric complex with HSP90. As to expression, highest expression in thymus, pancreas and testis. Also detected in heart, placenta, lung, liver, skeletal muscle, kidney, spleen, prostate, ovary, small intestine and colon. Poorly detected in brain and leukocytes. Strong protein expression in lymph node (cortical, paracortical and medullar regions), thyroid (follicular epithelial cells), testis (developing spermatozoa), stomach (cells lining the gastric pit), pancreas, kidney (proximal and distal-tubule cells and collecting duct cells but not in glomeruli), endometrium and colon (goblet cells). Moderate protein expression in spleen, prostate (epithelium and squamous cell carcinomas), placenta and adrenal gland. Weak protein expression in liver, heart, breast, ovary, and lung. No protein expression in brain and bladder. High protein expression in most lymphomas and melanomas.

It is found in the nucleus. The catalysed reaction is S-ubiquitinyl-[E2 ubiquitin-conjugating enzyme]-L-cysteine + [acceptor protein]-L-lysine = [E2 ubiquitin-conjugating enzyme]-L-cysteine + N(6)-ubiquitinyl-[acceptor protein]-L-lysine.. The protein operates within protein modification; protein ubiquitination. Its function is as follows. Has a ubiquitin-protein ligase activity acting as an E3 ubiquitin protein ligase or as an ubiquitin-ubiquitin ligase promoting elongation of ubiquitin chains on substrates. By mediating 'Lys-48'-linked polyubiquitination of proteins could target them for proteasomal degradation. May also function as a chaperone, playing a role in transport to the cell membrane of BSG/Basigin for instance. Probable inactive PPIase with no peptidyl-prolyl cis-trans isomerase activity. As a component of the minor spliceosome, involved in the splicing of U12-type introns in pre-mRNAs. This is RING-type E3 ubiquitin-protein ligase PPIL2 from Homo sapiens (Human).